The following is a 637-amino-acid chain: MDEADGIILITLKDLGCEIEENETIKNFDSEMVYKCILAYLRVINEQKVINLTNTLPKNMSARVNACSLIANIIKDSGYRSELSYHNLLYPNVNDIRKIFIFLGQLLPKKEVESGGVSIQKLEDQICQYLQGCVKESWIPYFCPFSKRIPGNYSTATLFTTTGGNLRIPSRGRQLKVTPGLEQYYSQYLEPLTLQTNRFEDIAPSVFEYNLSIYAEAQERDNEWNDKGVSSGMNPIDYRKNKQKQVLSKMNDSIRQSIIDGGNNQISSNCNSGDSFLDIISEFRGNSLDVGGQFNRKKAFTNELNNNNNNNNDSTTNTNKVETEIETEEQRQLKRQAEIDALQSQIDEISESIQLHNKEMLDFLSLMRQSESENLEQDQQREVLEKQYKIKKKTFSLLDDAEGNMKELQSLCNQTSSNLLEMSGEWEKVRKPIIEKYRSLKDKQNNQADETKSKLDRIKEMRILIKKLVSEVQQKDDQFQQLQDQYKQAPKDSNRSQYTRRILETVKNIKKQKVDIDKVLLDTKNLQKEINTITDTAVRTFELVKDLLYNDAKKDQTAKQAIKSFAIIDDKFQKLFKTIDETGNFQNNILNLNSKIEHVSQKTNTLNSDRVVQDLKNIKSENQSLIKQIKTLIETKN.

Coiled-coil stretches lie at residues 322–489 (ETEI…YKQA) and 608–637 (SDRV…ETKN).

The protein belongs to the CCDC22 family.

The polypeptide is Coiled-coil domain-containing protein 22 homolog (Dictyostelium discoideum (Social amoeba)).